A 657-amino-acid polypeptide reads, in one-letter code: Threonine--tRNA ligase (657 aa).

The 61-residue stretch at 1-61 folds into the TGS domain; it reads MINVTLPDGS…EGDASVAIIT (61 aa). The segment at 244–549 is catalytic; the sequence is DHRKLGAQLD…LIENYAGSFP (306 aa). Zn(2+)-binding residues include Cys349, His400, and His526.

The protein belongs to the class-II aminoacyl-tRNA synthetase family. Homodimer. It depends on Zn(2+) as a cofactor.

The protein resides in the cytoplasm. It catalyses the reaction tRNA(Thr) + L-threonine + ATP = L-threonyl-tRNA(Thr) + AMP + diphosphate + H(+). Functionally, catalyzes the attachment of threonine to tRNA(Thr) in a two-step reaction: L-threonine is first activated by ATP to form Thr-AMP and then transferred to the acceptor end of tRNA(Thr). Also edits incorrectly charged L-seryl-tRNA(Thr). The polypeptide is Threonine--tRNA ligase (Hyphomonas neptunium (strain ATCC 15444)).